The chain runs to 483 residues: Argininosuccinate lyase (483 aa).

It belongs to the lyase 1 family. Argininosuccinate lyase subfamily.

It is found in the cytoplasm. The catalysed reaction is 2-(N(omega)-L-arginino)succinate = fumarate + L-arginine. It functions in the pathway amino-acid biosynthesis; L-arginine biosynthesis; L-arginine from L-ornithine and carbamoyl phosphate: step 3/3. The sequence is that of Argininosuccinate lyase from Archaeoglobus fulgidus (strain ATCC 49558 / DSM 4304 / JCM 9628 / NBRC 100126 / VC-16).